We begin with the raw amino-acid sequence, 239 residues long: Orotidine 5'-phosphate decarboxylase (239 aa).

Residues D15, K36, 63-72 (DLKFHDIPNT), T127, R189, Q198, G218, and R219 each bind substrate. The active-site Proton donor is K65.

The protein belongs to the OMP decarboxylase family. Type 1 subfamily. As to quaternary structure, homodimer.

The enzyme catalyses orotidine 5'-phosphate + H(+) = UMP + CO2. The protein operates within pyrimidine metabolism; UMP biosynthesis via de novo pathway; UMP from orotate: step 2/2. Functionally, catalyzes the decarboxylation of orotidine 5'-monophosphate (OMP) to uridine 5'-monophosphate (UMP). This is Orotidine 5'-phosphate decarboxylase from Prochlorococcus marinus subsp. pastoris (strain CCMP1986 / NIES-2087 / MED4).